The primary structure comprises 74 residues: Metallothionein-like protein type 2 (74 aa).

It belongs to the metallothionein superfamily. Type 15 family.

Functionally, metallothioneins have a high content of cysteine residues that bind various heavy metals. In Nicotiana plumbaginifolia (Leadwort-leaved tobacco), this protein is Metallothionein-like protein type 2.